The chain runs to 321 residues: Corticotropin-releasing factor-binding protein (321 aa).

The first 21 residues, Met1 to Gly21, serve as a signal peptide directing secretion. 5 cysteine pairs are disulfide-bonded: Cys59/Cys80, Cys103/Cys140, Cys182/Cys204, Cys237/Cys264, and Cys277/Cys317. Asn203 carries an N-linked (GlcNAc...) asparagine glycan.

The protein belongs to the CRF-binding protein family.

Its subcellular location is the secreted. Functionally, binds CRF and inactivates it. May prevent inappropriate pituitary-adrenal stimulation in pregnancy. The sequence is that of Corticotropin-releasing factor-binding protein (crhbp) from Xenopus laevis (African clawed frog).